The chain runs to 117 residues: Nascent polypeptide-associated complex protein (117 aa).

Positions proline 3 to threonine 72 constitute an NAC-A/B domain.

The protein belongs to the NAC-alpha family. In terms of assembly, homodimer. Interacts with the ribosome. Binds ribosomal RNA.

Contacts the emerging nascent chain on the ribosome. The polypeptide is Nascent polypeptide-associated complex protein (Aeropyrum pernix (strain ATCC 700893 / DSM 11879 / JCM 9820 / NBRC 100138 / K1)).